Here is a 451-residue protein sequence, read N- to C-terminus: Tubulin beta-4 chain (451 aa).

Residues Gln-11, Glu-69, Ser-138, Gly-142, Thr-143, Gly-144, Asn-204, and Asn-226 each coordinate GTP. Residue Glu-69 participates in Mg(2+) binding. Positions 417 to 427 (DLVSEYQQYQD) are enriched in polar residues. Residues 417–451 (DLVSEYQQYQDATAEEEGEYDEDDGGYGDEDDGMM) are disordered. The span at 429–451 (TAEEEGEYDEDDGGYGDEDDGMM) shows a compositional bias: acidic residues.

Belongs to the tubulin family. Dimer of alpha and beta chains. A typical microtubule is a hollow water-filled tube with an outer diameter of 25 nm and an inner diameter of 15 nM. Alpha-beta heterodimers associate head-to-tail to form protofilaments running lengthwise along the microtubule wall with the beta-tubulin subunit facing the microtubule plus end conferring a structural polarity. Microtubules usually have 13 protofilaments but different protofilament numbers can be found in some organisms and specialized cells. Mg(2+) is required as a cofactor.

The protein resides in the cytoplasm. The protein localises to the cytoskeleton. Its function is as follows. Tubulin is the major constituent of microtubules, a cylinder consisting of laterally associated linear protofilaments composed of alpha- and beta-tubulin heterodimers. Microtubules grow by the addition of GTP-tubulin dimers to the microtubule end, where a stabilizing cap forms. Below the cap, tubulin dimers are in GDP-bound state, owing to GTPase activity of alpha-tubulin. This Oomycete-like sp. (strain MacKay2000) protein is Tubulin beta-4 chain (TUBB4).